Here is a 227-residue protein sequence, read N- to C-terminus: Enolase-phosphatase E1 (227 aa).

It belongs to the HAD-like hydrolase superfamily. MasA/MtnC family. As to quaternary structure, monomer. The cofactor is Mg(2+).

The enzyme catalyses 5-methylsulfanyl-2,3-dioxopentyl phosphate + H2O = 1,2-dihydroxy-5-(methylsulfanyl)pent-1-en-3-one + phosphate. It participates in amino-acid biosynthesis; L-methionine biosynthesis via salvage pathway; L-methionine from S-methyl-5-thio-alpha-D-ribose 1-phosphate: step 3/6. Its pathway is amino-acid biosynthesis; L-methionine biosynthesis via salvage pathway; L-methionine from S-methyl-5-thio-alpha-D-ribose 1-phosphate: step 4/6. Bifunctional enzyme that catalyzes the enolization of 2,3-diketo-5-methylthiopentyl-1-phosphate (DK-MTP-1-P) into the intermediate 2-hydroxy-3-keto-5-methylthiopentenyl-1-phosphate (HK-MTPenyl-1-P), which is then dephosphorylated to form the acireductone 1,2-dihydroxy-3-keto-5-methylthiopentene (DHK-MTPene). This Azotobacter vinelandii (strain DJ / ATCC BAA-1303) protein is Enolase-phosphatase E1.